The chain runs to 567 residues: Urease subunit alpha (567 aa).

A Urease domain is found at 129-567; sequence GGIDSHIHFI…LPLAQRYFLF (439 aa). The Ni(2+) site is built by His134, His136, and Lys217. Position 217 is an N6-carboxylysine (Lys217). His219 lines the substrate pocket. Residues His246 and His272 each coordinate Ni(2+). The Proton donor role is filled by His320. Asp360 serves as a coordination point for Ni(2+).

It belongs to the metallo-dependent hydrolases superfamily. Urease alpha subunit family. In terms of assembly, heterotrimer of UreA (gamma), UreB (beta) and UreC (alpha) subunits. Three heterotrimers associate to form the active enzyme. The cofactor is Ni cation. In terms of processing, carboxylation allows a single lysine to coordinate two nickel ions.

Its subcellular location is the cytoplasm. It catalyses the reaction urea + 2 H2O + H(+) = hydrogencarbonate + 2 NH4(+). The protein operates within nitrogen metabolism; urea degradation; CO(2) and NH(3) from urea (urease route): step 1/1. This is Urease subunit alpha from Pseudomonas putida (strain W619).